A 692-amino-acid polypeptide reads, in one-letter code: MSSFEGQMAEYPTISIDRFDRENLRARAYFLSHCHKDHMKGLRAPTLKRRLECSLKVYLYCSPVTKELLLTSPKYRFWKKRIISIEIETPTQISLVDEASGEKEEIVVTLLPAGHCPGSVMFLFQGNNGTVLYTGDFRLAQGEAARMELLHSGGRVKDIQSVYLDTTFCDPRFYQIPSREECLSGVLELVRSWITRSPYHVVWLNCKAAYGYEYLFTNLSEELGVQVHVNKLDMFRNMPEILHHLTTDRNTQIHACRHPKAEEYFQWSKLPCGITSRNRIPLHIISIKPSTMWFGERSRKTNVIVRTGESSYRACFSFHSSYSEIKDFLSYLCPVNAYPNVIPVGTTMDKVVEILKPLCRSSQSTEPKYKPLGKLKRARTVHRDSEEEDDYLFDDPLPIPLRHKVPYPETFHPEVFSMTAVSEKQPEKLRQTPGCCRAECMQSSRFTNFVDCEESNSESEEEVGIPASLQGDLGSVLHLQKADGDVPQWEVFFKRNDEITDESLENFPSSTVAGGSQSPKLFSDSDGESTHISSQNSSQSTHITEQGSQGWDSQSDTVLLSSQERNSGDITSLDKADYRPTIKENIPASLMEQNVICPKDTYSDLKSRDKDVTIVPSTGEPTTLSSETHIPEEKSLLNLSTNADSQSSSDFEVPSTPEAELPKREHLQYLYEKLATGESIAVKKRKCSLLDT.

Position 380 is a phosphothreonine (threonine 380). Residue serine 385 is modified to Phosphoserine. Disordered regions lie at residues 504–555 (LENF…DSQS) and 640–664 (STNA…LPKR). The span at 506–520 (NFPSSTVAGGSQSPK) shows a compositional bias: polar residues. The segment covering 530–543 (THISSQNSSQSTHI) has biased composition (low complexity). 2 stretches are compositionally biased toward polar residues: residues 544–555 (TEQGSQGWDSQS) and 640–650 (STNADSQSSSD). Residue serine 645 is modified to Phosphoserine; by ATM.

The protein belongs to the DNA repair metallo-beta-lactamase (DRMBL) family. Interacts with LIG4; the interaction is direct. Interacts with ATM. Interacts with BRCA1. Interacts with PRKDC. Interacts with TP53BP1. Also exhibits ATM- and phosphorylation-dependent interaction with the MRN complex, composed of MRE11, RAD50, and NBN. Post-translationally, phosphorylation on undefined residues by PRKDC may stimulate endonucleolytic activity on 5' and 3' hairpins and overhangs. PRKDC must remain present, even after phosphorylation, for efficient hairpin opening. Also phosphorylated by ATM in response to ionizing radiation (IR) and by ATR in response to ultraviolet (UV) radiation. In terms of tissue distribution, ubiquitously expressed, with highest levels in the kidney, lung, pancreas and placenta (at the mRNA level). Expression is not increased in thymus or bone marrow, sites of V(D)J recombination.

Its subcellular location is the nucleus. Nuclease involved in DNA non-homologous end joining (NHEJ); required for double-strand break repair and V(D)J recombination. Required for V(D)J recombination, the process by which exons encoding the antigen-binding domains of immunoglobulins and T-cell receptor proteins are assembled from individual V, (D), and J gene segments. V(D)J recombination is initiated by the lymphoid specific RAG endonuclease complex, which generates site specific DNA double strand breaks (DSBs). These DSBs present two types of DNA end structures: hairpin sealed coding ends and phosphorylated blunt signal ends. These ends are independently repaired by the non homologous end joining (NHEJ) pathway to form coding and signal joints respectively. This protein exhibits single-strand specific 5'-3' exonuclease activity in isolation and acquires endonucleolytic activity on 5' and 3' hairpins and overhangs when in a complex with PRKDC. The latter activity is required specifically for the resolution of closed hairpins prior to the formation of the coding joint. Also required for the repair of complex DSBs induced by ionizing radiation, which require substantial end-processing prior to religation by NHEJ. The protein is Protein artemis of Homo sapiens (Human).